We begin with the raw amino-acid sequence, 245 residues long: Uridylate kinase (245 aa).

Position 13 to 16 (13 to 16 (KLSG)) interacts with ATP. Gly-56 contacts UMP. The ATP site is built by Gly-57 and Arg-61. UMP-binding positions include Asp-76 and 138–145 (TGRPFFTT). ATP is bound by residues Asn-166, Tyr-172, and Asp-175.

The protein belongs to the UMP kinase family. In terms of assembly, homohexamer.

The protein resides in the cytoplasm. It catalyses the reaction UMP + ATP = UDP + ADP. Its pathway is pyrimidine metabolism; CTP biosynthesis via de novo pathway; UDP from UMP (UMPK route): step 1/1. With respect to regulation, inhibited by UTP. Its function is as follows. Catalyzes the reversible phosphorylation of UMP to UDP. This chain is Uridylate kinase, found in Mycoplasma mobile (strain ATCC 43663 / 163K / NCTC 11711) (Mesomycoplasma mobile).